We begin with the raw amino-acid sequence, 510 residues long: Nectin-4 (510 aa).

Residues 1-31 form the signal peptide; it reads MPLSLGAEMWGPAAWLLLLLLLASFTGQRLA. Positions 32–144 constitute an Ig-like V-type domain; it reads GELETSDLVT…GSFQARLRLR (113 aa). Residues 32–349 are Extracellular-facing; the sequence is GELETSDLVT…GKQVDLVSAS (318 aa). Cystine bridges form between cysteine 52–cysteine 127, cysteine 171–cysteine 223, and cysteine 270–cysteine 315. 2 Ig-like C2-type domains span residues 148–237 and 248–331; these read PPLP…QRIT and ASVR…VVVD. Asparagine 281 carries an N-linked (GlcNAc...) asparagine glycan. A helical membrane pass occupies residues 350 to 370; sequence VVVVGVIAALLFCLLVVVVVL. At 371–510 the chain is on the cytoplasmic side; it reads MSRYHRRKAQ…IYINGRGHLV (140 aa). The span at 400–412 shows a compositional bias: basic and acidic residues; the sequence is RLHSHHSDPRNQP. The segment at 400-475 is disordered; the sequence is RLHSHHSDPR…GRAEEEEDRD (76 aa).

This sequence belongs to the nectin family. In terms of assembly, self-associates. Interacts via its Ig-like V-type domain with NECTIN1 Ig-like V-type domain. Interacts via its C-terminus with AFDN. Interacts with TIGIT.

Its subcellular location is the cell membrane. It is found in the cell junction. The protein localises to the adherens junction. Functionally, seems to be involved in cell adhesion through trans-homophilic and -heterophilic interactions, the latter including specifically interactions with NECTIN1. Plays a role in the senescence-associated cell size enlargement via SFK/PI3K/Rac1 and thus promotes senescent cell survival. Also participates in the innate immune response by acting as a ligand for the receptor TIGIT to inhibit NK-cell activity. The chain is Nectin-4 from Bos taurus (Bovine).